A 547-amino-acid chain; its full sequence is Chaperonin GroEL 2 (547 aa).

ATP contacts are provided by residues 30-33 (TLGP), K51, 87-91 (DGTTT), G415, and D496.

The protein belongs to the chaperonin (HSP60) family. In terms of assembly, forms a cylinder of 14 subunits composed of two heptameric rings stacked back-to-back. Interacts with the co-chaperonin GroES.

Its subcellular location is the cytoplasm. It catalyses the reaction ATP + H2O + a folded polypeptide = ADP + phosphate + an unfolded polypeptide.. Its function is as follows. Together with its co-chaperonin GroES, plays an essential role in assisting protein folding. The GroEL-GroES system forms a nano-cage that allows encapsulation of the non-native substrate proteins and provides a physical environment optimized to promote and accelerate protein folding. In Rhodopseudomonas palustris (strain ATCC BAA-98 / CGA009), this protein is Chaperonin GroEL 2.